We begin with the raw amino-acid sequence, 407 residues long: D-galactonate dehydratase family member Pjdr2_1176 (407 aa).

Residue D208 participates in Mg(2+) binding. H210 serves as a coordination point for D-arabinonate. 2 residues coordinate Mg(2+): E234 and E260. D-arabinonate-binding residues include E260, R281, and E337.

The protein belongs to the mandelate racemase/muconate lactonizing enzyme family. GalD subfamily.

In terms of biological role, has no detectable activity with D-mannonate and with a panel of 70 other acid sugars (in vitro), in spite of the conservation of the residues that are expected to be important for catalytic activity and cofactor binding. May have evolved a divergent function. This chain is D-galactonate dehydratase family member Pjdr2_1176, found in Paenibacillus sp. (strain JDR-2).